Here is a 399-residue protein sequence, read N- to C-terminus: Nicotinate phosphoribosyltransferase (399 aa).

His-217 carries the phosphohistidine; by autocatalysis modification.

Belongs to the NAPRTase family. Post-translationally, transiently phosphorylated on a His residue during the reaction cycle. Phosphorylation strongly increases the affinity for substrates and increases the rate of nicotinate D-ribonucleotide production. Dephosphorylation regenerates the low-affinity form of the enzyme, leading to product release.

The catalysed reaction is nicotinate + 5-phospho-alpha-D-ribose 1-diphosphate + ATP + H2O = nicotinate beta-D-ribonucleotide + ADP + phosphate + diphosphate. It participates in cofactor biosynthesis; NAD(+) biosynthesis; nicotinate D-ribonucleotide from nicotinate: step 1/1. In terms of biological role, catalyzes the synthesis of beta-nicotinate D-ribonucleotide from nicotinate and 5-phospho-D-ribose 1-phosphate at the expense of ATP. The sequence is that of Nicotinate phosphoribosyltransferase from Burkholderia orbicola (strain MC0-3).